Here is a 148-residue protein sequence, read N- to C-terminus: Glutamyl-tRNA(Gln) amidotransferase subunit C, mitochondrial (148 aa).

The protein belongs to the GatC family. In terms of assembly, subunit of the heterotrimeric GatCAB amidotransferase (AdT) complex, composed of A, B and C subunits.

It is found in the mitochondrion. The catalysed reaction is L-glutamyl-tRNA(Gln) + L-glutamine + ATP + H2O = L-glutaminyl-tRNA(Gln) + L-glutamate + ADP + phosphate + H(+). Allows the formation of correctly charged Gln-tRNA(Gln) through the transamidation of misacylated Glu-tRNA(Gln) in the mitochondria. The reaction takes place in the presence of glutamine and ATP through an activated gamma-phospho-Glu-tRNA(Gln). The polypeptide is Glutamyl-tRNA(Gln) amidotransferase subunit C, mitochondrial (Drosophila sechellia (Fruit fly)).